Here is a 489-residue protein sequence, read N- to C-terminus: MYASLMDVGQTLAARLADSDGNGANDSGLLATGQGLEQEQEGLALDMGHNASADGGIVPYVPVLDRPETYIVTVLYTLIFIVGVLGNGTLVIIFFRHRSMRNIPNTYILSLALADLLVILVCVPVATIVYTQESWPFERNMCRISEFFKDISIGVSVFTLTALSGERYCAIVNPLRKLQTKPLTVFTAVMIWILAILLGMPSVLFSDIKSYPVFTATGNMTIEVCSPFRDPEYAKFMVAGKALVYYLLPLSIIGALYIMMAKRLHMSARNMPGEQQSMQSRTQARARLHVARMVVAFVVVFFICFFPYHVFELWYHFYPTAEEDFDEFWNVLRIVGFCTSFLNSCVNPVALYCVSGVFRQHFNRYLCCICVKRQPHLRQHSTATGMMDNTSVMSMRRSTYVGGTAGNLRASLHRNSNHGVGGAGGGVGGGVGSGRVGSFHRQDSMPLQHGNAHGGGAGGGSSGLGAGGRTAAVSEKSFINRYESGVMRY.

The Extracellular portion of the chain corresponds to 1-74; the sequence is MYASLMDVGQ…DRPETYIVTV (74 aa). 2 N-linked (GlcNAc...) asparagine glycosylation sites follow: N25 and N50. A helical membrane pass occupies residues 75–95; sequence LYTLIFIVGVLGNGTLVIIFF. The Cytoplasmic segment spans residues 96–107; it reads RHRSMRNIPNTY. Residues 108–128 form a helical membrane-spanning segment; that stretch reads ILSLALADLLVILVCVPVATI. The Extracellular portion of the chain corresponds to 129 to 143; it reads VYTQESWPFERNMCR. A disulfide bridge links C142 with C225. Residues 144–164 traverse the membrane as a helical segment; the sequence is ISEFFKDISIGVSVFTLTALS. The Cytoplasmic portion of the chain corresponds to 165 to 184; the sequence is GERYCAIVNPLRKLQTKPLT. A helical transmembrane segment spans residues 185–205; sequence VFTAVMIWILAILLGMPSVLF. Topologically, residues 206–235 are extracellular; sequence SDIKSYPVFTATGNMTIEVCSPFRDPEYAK. A glycan (N-linked (GlcNAc...) asparagine) is linked at N219. The helical transmembrane segment at 236 to 256 threads the bilayer; it reads FMVAGKALVYYLLPLSIIGAL. Over 257–293 the chain is Cytoplasmic; sequence YIMMAKRLHMSARNMPGEQQSMQSRTQARARLHVARM. A helical transmembrane segment spans residues 294 to 314; that stretch reads VVAFVVVFFICFFPYHVFELW. The Extracellular segment spans residues 315–333; it reads YHFYPTAEEDFDEFWNVLR. The chain crosses the membrane as a helical span at residues 334–354; sequence IVGFCTSFLNSCVNPVALYCV. Residues 355–489 lie on the Cytoplasmic side of the membrane; it reads SGVFRQHFNR…NRYESGVMRY (135 aa). The segment at 438–468 is disordered; sequence SFHRQDSMPLQHGNAHGGGAGGGSSGLGAGG. Gly residues predominate over residues 452–468; it reads AHGGGAGGGSSGLGAGG.

This sequence belongs to the G-protein coupled receptor 1 family. As to expression, highly expressed in larval brain. Also highly expressed in adult brain with very low levels in larval and adult gut.

It is found in the cell membrane. Functionally, receptor for the neuropeptide CCHamide-2. This is Neuropeptide CCHamide-2 receptor from Drosophila melanogaster (Fruit fly).